Consider the following 311-residue polypeptide: Malate dehydrogenase (311 aa).

NAD(+) is bound by residues 7–12 (GAGNVG) and D32. Residues R82 and R88 each contribute to the substrate site. NAD(+)-binding positions include N95 and 118–120 (VSN). Substrate-binding residues include N120 and R151. Residue H175 is the Proton acceptor of the active site.

The protein belongs to the LDH/MDH superfamily. MDH type 3 family. In terms of assembly, homotetramer.

It catalyses the reaction (S)-malate + NAD(+) = oxaloacetate + NADH + H(+). Strongly inhibited by iodoacetic acid and CuCl(2). Completely inhibited by N-ethylmaleimide and HgCl(2). In terms of biological role, catalyzes the reversible oxidation of malate to oxaloacetate. Can use both NAD and NADP for malate oxidation, but NADPH cannot be used for oxaloacetate reduction. This chain is Malate dehydrogenase, found in Flavobacterium frigidimaris.